Consider the following 874-residue polypeptide: Ribosome biogenesis protein ERB1 (874 aa).

The segment at 1-148 (MAKKEVSASK…DAFAAADAAT (148 aa)) is disordered. Over residues 27–41 (QAVEKEEAEKEKEEG) the composition is skewed to basic and acidic residues. Residues 55–77 (PESDSDDEGAAAAEEEEEEEEQQ) show a composition bias toward acidic residues. Residues 78–89 (QDVKELDLDKGE) show a composition bias toward basic and acidic residues. 2 stretches are compositionally biased toward acidic residues: residues 95 to 104 (SDAEDFDSEE) and 128 to 139 (PKEDGDEQDEQD). Residues 312–429 (RFVPSKHEAK…LRLVPGYQDS (118 aa)) are required for interaction with NOP7. The segment at 429 to 465 (SVRERFERSLDLYLAPRLRKNKLNIDPESLIPELPSP) is required for interaction with YTM1. WD repeat units follow at residues 481-520 (GHTG…QVFK) and 529-569 (NGED…FEIE). The segment covering 593–602 (KVKGEDTKGD) has biased composition (basic and acidic residues). A disordered region spans residues 593–640 (KVKGEDTKGDLDDDEEEEEEEEDDDDDEGQGKVKAHNSTAPAKKDVAK). Residues 603 to 620 (LDDDEEEEEEEEDDDDDE) are compositionally biased toward acidic residues. WD repeat units lie at residues 658-700 (QCRR…SQSP), 703-741 (KSKG…LLKK), 744-783 (PGVR…TPYK), 787-827 (YHEK…DLMT), and 843-874 (INQI…LWTT).

It belongs to the WD repeat BOP1/ERB1 family. As to quaternary structure, component of the NOP7 complex, composed of ERB1, NOP7 and YTM1. The complex is held together by ERB1, which interacts with NOP7 via its N-terminal domain and with YTM1 via a high-affinity interaction between the seven-bladed beta-propeller domains of the 2 proteins. The NOP7 complex associates with the 66S pre-ribosome.

It localises to the nucleus. The protein resides in the nucleolus. The protein localises to the nucleoplasm. In terms of biological role, component of the NOP7 complex, which is required for maturation of the 25S and 5.8S ribosomal RNAs and formation of the 60S ribosome. This is Ribosome biogenesis protein ERB1 from Lodderomyces elongisporus (strain ATCC 11503 / CBS 2605 / JCM 1781 / NBRC 1676 / NRRL YB-4239) (Yeast).